A 166-amino-acid polypeptide reads, in one-letter code: MVDVQAQRKQIEKLISLNRVTKVVKGGRRFSFAAFMVVGDGEGYVGWGFGKANDASDAIKKSLTSARKNLRFVPIRKGTLPHEVIGCFKKAKVLIKPATHGTGVIAGGPVRAVMEALGVHDILSKSLGSNNSMNVVKATFKAFDLVLNAEKVAEMRGKKTLKTLWG.

In terms of domain architecture, S5 DRBM spans 10–73 (QIEKLISLNR…TSARKNLRFV (64 aa)).

This sequence belongs to the universal ribosomal protein uS5 family. Part of the 30S ribosomal subunit. Contacts proteins S4 and S8.

Functionally, with S4 and S12 plays an important role in translational accuracy. Located at the back of the 30S subunit body where it stabilizes the conformation of the head with respect to the body. The chain is Small ribosomal subunit protein uS5 from Borrelia garinii subsp. bavariensis (strain ATCC BAA-2496 / DSM 23469 / PBi) (Borreliella bavariensis).